Here is a 445-residue protein sequence, read N- to C-terminus: Acyl-CoA Delta-4 desaturase (445 aa).

One can recognise a Cytochrome b5 heme-binding domain in the interval 19 to 96 (AGVYTWEEVQ…MKPLLVGELA (78 aa)). The next 4 membrane-spanning stretches (helical) occupy residues 132-152 (LFFLLHLGHILLLEALALLMV), 153-173 (WHWGTGWLQTLLCAVMLATAQ), 266-286 (YFFLVAPPLLIPVFYNYNIMM), and 307-327 (YMLCYVPVYGLFGSLALMMFA).

This sequence belongs to the fatty acid desaturase type 1 family.

It localises to the membrane. The catalysed reaction is (8Z,11Z,14Z,17Z)-eicosatetraenoyl-CoA + 2 Fe(II)-[cytochrome b5] + O2 + 2 H(+) = (5Z,8Z,11Z,14Z,17Z)-eicosapentaenoyl-CoA + 2 Fe(III)-[cytochrome b5] + 2 H2O. The enzyme catalyses (7Z,10Z,13Z,16Z)-docosatetraenoyl-CoA + 2 Fe(II)-[cytochrome b5] + O2 + 2 H(+) = (4Z,7Z,10Z,13Z,16Z)-docosapentaenoyl-CoA + 2 Fe(III)-[cytochrome b5] + 2 H2O. It catalyses the reaction (7Z,10Z,13Z,16Z,19Z)-docosapentaenoyl-CoA + 2 Fe(II)-[cytochrome b5] + O2 + 2 H(+) = (4Z,7Z,10Z,13Z,16Z,19Z)-docosahexaenoyl-CoA + 2 Fe(III)-[cytochrome b5] + 2 H2O. It participates in lipid metabolism; polyunsaturated fatty acid biosynthesis. Fatty acid desaturase with bifunctional delta-4 and delta-5 activities. Component of a lipid metabolic pathway that catalyzes the biosynthesis of polyunsaturated fatty acids (PUFA) with preference toward n-3 substrates and Delta(4)function. The sequence is that of Acyl-CoA Delta-4 desaturase from Siganus canaliculatus (White-spotted spinefoot).